The following is a 67-amino-acid chain: Large ribosomal subunit protein bL35 (67 aa).

Positions 1 to 16 (MPKMKTKSSAKKRFRV) are enriched in basic residues. Residues 1–24 (MPKMKTKSSAKKRFRVRPGGTVKR) are disordered.

This sequence belongs to the bacterial ribosomal protein bL35 family.

The chain is Large ribosomal subunit protein bL35 from Paracidovorax citrulli (strain AAC00-1) (Acidovorax citrulli).